We begin with the raw amino-acid sequence, 473 residues long: Ribulose bisphosphate carboxylase large chain (473 aa).

Lys-8 is modified (N6,N6,N6-trimethyllysine). 2 residues coordinate substrate: Asn-117 and Thr-167. Lys-169 functions as the Proton acceptor in the catalytic mechanism. Lys-171 contacts substrate. Mg(2+) contacts are provided by Lys-195, Asp-197, and Glu-198. Lys-195 is subject to N6-carboxylysine. His-288 (proton acceptor) is an active-site residue. Positions 289, 321, and 373 each coordinate substrate.

It belongs to the RuBisCO large chain family. Type I subfamily. Heterohexadecamer of 8 large chains and 8 small chains; disulfide-linked. The disulfide link is formed within the large subunit homodimers. It depends on Mg(2+) as a cofactor. In terms of processing, the disulfide bond which can form in the large chain dimeric partners within the hexadecamer appears to be associated with oxidative stress and protein turnover.

It localises to the plastid. The protein resides in the chloroplast. The catalysed reaction is 2 (2R)-3-phosphoglycerate + 2 H(+) = D-ribulose 1,5-bisphosphate + CO2 + H2O. The enzyme catalyses D-ribulose 1,5-bisphosphate + O2 = 2-phosphoglycolate + (2R)-3-phosphoglycerate + 2 H(+). Its function is as follows. RuBisCO catalyzes two reactions: the carboxylation of D-ribulose 1,5-bisphosphate, the primary event in carbon dioxide fixation, as well as the oxidative fragmentation of the pentose substrate in the photorespiration process. Both reactions occur simultaneously and in competition at the same active site. The chain is Ribulose bisphosphate carboxylase large chain from Amorphophallus titanum (Titan arum).